The chain runs to 492 residues: ATP synthase subunit beta, chloroplastic (492 aa).

Residue 170-177 (GGAGVGKT) participates in ATP binding.

The protein belongs to the ATPase alpha/beta chains family. As to quaternary structure, F-type ATPases have 2 components, CF(1) - the catalytic core - and CF(0) - the membrane proton channel. CF(1) has five subunits: alpha(3), beta(3), gamma(1), delta(1), epsilon(1). CF(0) has four main subunits: a(1), b(1), b'(1) and c(9-12).

It is found in the plastid. It localises to the chloroplast thylakoid membrane. It carries out the reaction ATP + H2O + 4 H(+)(in) = ADP + phosphate + 5 H(+)(out). Its function is as follows. Produces ATP from ADP in the presence of a proton gradient across the membrane. The catalytic sites are hosted primarily by the beta subunits. This Marchantia polymorpha (Common liverwort) protein is ATP synthase subunit beta, chloroplastic.